The primary structure comprises 387 residues: Xylose isomerase (387 aa).

Residues His-54 and Asp-57 contribute to the active site. Mg(2+)-binding residues include Glu-181, Glu-217, His-220, Asp-245, Asp-255, Asp-257, and Asp-287.

It belongs to the xylose isomerase family. In terms of assembly, homotetramer. Requires Mg(2+) as cofactor.

It localises to the cytoplasm. The catalysed reaction is alpha-D-xylose = alpha-D-xylulofuranose. In Streptomyces coelicolor (strain ATCC BAA-471 / A3(2) / M145), this protein is Xylose isomerase.